A 1258-amino-acid chain; its full sequence is MGDMANSSIEFHPKPQQQREVPHVGGFGCTLAELRSLMELRGAEALQKIQEAYGDVSGLCRRLKTSPTEGLADNTNDLEKRRQIYGQNFIPPKQPKTFLQLVWEALQDVTLIILEVAAIVSLGLSFYAPPGEESEACGNVSGGAEDEGEAEAGWIEGAAILLSVICVVLVTAFNDWSKEKQFRGLQSRIEQEQKFTVIRNGQLLQVPVAALVVGDIAQVKYGDLLPADGVLIQGNDLKIDESSLTGESDHVRKSADKDPMLLSGTHVMEGSGRMVVTAVGVNSQTGIIFTLLGAGGEEEEKKDKKGKQQDGAMESSQTKAKKQDGAVAMEMQPLKSAEGGEMEEREKKKANVPKKEKSVLQGKLTKLAVQIGKAGLVMSAITVIILVLYFVIETFVVDGRVWLAECTPVYVQYFVKFFIIGVTVLVVAVPEGLPLAVTISLAYSVKKMMKDNNLVRHLDACETMGNATAICSDKTGTLTTNRMTVVQSYLGDTHYKEIPAPSALTPKILDLLVHAISINSAYTTKILPPEKEGALPRQVGNKTECALLGFILDLKRDFQPVREQIPEDQLYKVYTFNSVRKSMSTVIRMPDGGFRLFSKGASEILLKKCTNILNSNGELRGFRPRDRDDMVKKIIEPMACDGLRTICIAYRDFSAIQEPDWDNENEVVGDLTCIAVVGIEDPVRPEVPEAIRKCQRAGITVRMVTGDNINTARAIAAKCGIIQPGEDFLCLEGKEFNRRIRNEKGEIEQERLDKVWPKLRVLARSSPTDKHTLVKGIIDSTTGEQRQVVAVTGDGTNDGPALKKADVGFAMGIAGTDVAKEASDIILTDDNFTSIVKAVMWGRNVYDSISKFLQFQLTVNVVAVIVAFTGACITQDSPLKAVQMLWVNLIMDTFASLALATEPPTESLLLRKPYGRDKPLISRTMMKNILGHAVYQLTIIFTLLFVGELFFDIDSGRNAPLHSPPSEHYTIIFNTFVMMQLFNEINARKIHGERNVFDGIFSNPIFCTIVLGTFGIQIVIVQFGGKPFSCSPLSTEQWLWCLFVGVGELVWGQVIATIPTSQLKCLKEAGHGPGKDEMTDEELAEGEEEIDHAERELRRGQILWFRGLNRIQTQMEVVSTFKRSGSFQGAVRRRSSVLSQLHDVTNLSTPTHIRVVKAFRSSLYEGLEKPESKSCIHNFMATPEFLINDYTHNIPLIDDTDVDENEERLRAPPPPPPNQNNNAIDSGIYLTTHATKSATSSAFSSRPGSPLHSMETSL.

Residues M1–R19 show a composition bias toward polar residues. The segment at M1 to P22 is disordered. At M1 to T97 the chain is on the cytoplasmic side. S8 carries the post-translational modification Phosphoserine. The chain crosses the membrane as a helical span at residues F98–A118. Over I119–I155 the chain is Extracellular. Residues E156–W176 form a helical membrane-spanning segment. Residues S177–L364 are Cytoplasmic-facing. Disordered regions lie at residues E298 to A328 and K335 to K354. 2 stretches are compositionally biased toward basic and acidic residues: residues E299–Q308 and M342–K354. A helical membrane pass occupies residues T365–I384. At I385–F417 the chain is on the extracellular side. The helical transmembrane segment at F418–L435 threads the bilayer. The Cytoplasmic portion of the chain corresponds to A436–I849. The active-site 4-aspartylphosphate intermediate is D473. D794 and D798 together coordinate Mg(2+). The helical transmembrane segment at S850–T869 threads the bilayer. Residues G870–L879 are Extracellular-facing. The chain crosses the membrane as a helical span at residues K880 to A900. Residues T901–L920 are Cytoplasmic-facing. A helical transmembrane segment spans residues I921 to L943. The Extracellular portion of the chain corresponds to L944–L961. A helical membrane pass occupies residues H962–N983. Residues E984–S1002 are Cytoplasmic-facing. Residues N1003–G1024 form a helical membrane-spanning segment. Over G1025–S1034 the chain is Extracellular. Residues T1035–A1056 form a helical membrane-spanning segment. Over T1057–L1258 the chain is Cytoplasmic. The residue at position 1079 (T1079) is a Phosphothreonine. Positions L1097–Q1114 are calmodulin-binding subdomain A. Phosphothreonine; by PKC is present on T1113. The tract at residues M1115–S1124 is calmodulin-binding subdomain B. Position 1126 is a phosphoserine (S1126). The disordered stretch occupies residues E1204–L1258. A compositionally biased stretch (low complexity) spans T1231 to S1245.

The protein belongs to the cation transport ATPase (P-type) (TC 3.A.3) family. Type IIB subfamily. Interacts with PDZD11. Interacts (via N-terminus) with YWHAE. As to expression, expressed predominantly in brain and skeletal muscle. Expressed in the molecular layer of the cerebellar cortex, in particular in granule cells (at protein level). Expressed in aldosterone producing glomerulosa cells of adrenal glands (at protein level). Detected at low levels in various tissues including testis, stomach, small intestine, and large intestine. In terms of tissue distribution, most abundant form in brain and most other tissues. Most abundant form in skeletal muscle and is also found in brain and at low levels in testis and kidney.

The protein localises to the cell membrane. It is found in the presynaptic cell membrane. The enzyme catalyses Ca(2+)(in) + ATP + H2O = Ca(2+)(out) + ADP + phosphate + H(+). Functionally, ATP-driven Ca(2+) ion pump involved in the maintenance of basal intracellular Ca(2+) levels at the presynaptic terminals. Uses ATP as an energy source to transport cytosolic Ca(2+) ions across the plasma membrane to the extracellular compartment. May counter-transport protons, but the mechanism and the stoichiometry of this Ca(2+)/H(+) exchange remains to be established. The polypeptide is Plasma membrane calcium-transporting ATPase 3 (Atp2b3) (Rattus norvegicus (Rat)).